Consider the following 2462-residue polypeptide: Piezo-type mechanosensitive ion channel homolog (2462 aa).

19 consecutive transmembrane segments (helical) span residues 5–25 (LVGF…WSVI), 27–47 (FLDL…GYRF), 57–77 (IFIF…IWAA), 105–125 (TVMY…ADIY), 163–183 (AVQL…FFIG), 207–227 (LYIY…PINF), 248–268 (EGPD…LSYV), 325–345 (FFTY…FHFA), 347–367 (LCAF…PSLF), 374–394 (GLLL…NVAF), 404–424 (FGLG…FLYL), 467–487 (LIFL…IFFL), 502–522 (SLIL…IDLV), 554–574 (IALL…LFSF), 653–673 (VYLV…LLWI), 694–714 (AVLV…QLWL), 730–750 (APLL…QLYS), 792–812 (FYAS…GLVI), and 826–846 (SFLI…LWGM). A disordered region spans residues 927 to 947 (ASVSSSNGENPSSTDHASISM). Over residues 928 to 939 (SVSSSNGENPSS) the composition is skewed to low complexity. Transmembrane regions (helical) follow at residues 1027-1047 (FWIE…ALLL), 1050-1070 (FALL…CVLL), 1078-1098 (LWPV…VATW), 1143-1160 (TLIS…KLRA), 1204-1224 (LYCY…TGTL), 1228-1248 (ILHL…LEIL), 1260-1280 (VYNF…VGNF), and 1310-1330 (SALV…MFSS). Residues 1347 to 1400 (AIVREQEKKAARKTEQLQQIREAEEKKRQRNLQVEKMKSEMLNLRVQLHRMNSD) adopt a coiled-coil conformation. The segment at 1543 to 1583 (SDTNEQSSVDDEVYDEMESQKRKHTPFERSTSLQSDRSSDG) is disordered. A compositionally biased stretch (acidic residues) spans 1550-1559 (SVDDEVYDEM). Positions 1570–1583 (ERSTSLQSDRSSDG) are enriched in polar residues. 8 consecutive transmembrane segments (helical) span residues 1611 to 1631 (FIIA…AALF), 1647 to 1667 (VIML…QIII), 1916 to 1936 (YIFG…QSVI), 1956 to 1976 (FVII…IYLC), 1984 to 2004 (VYYL…AWSI), 2012 to 2032 (AGLA…LQAI), 2130 to 2150 (GICL…MYSS), and 2369 to 2389 (FLGD…FVLA).

The protein belongs to the PIEZO (TC 1.A.75) family.

It is found in the membrane. Pore-forming subunit of a mechanosensitive non-specific cation channel, that conducts both sodium and potassium ions. The polypeptide is Piezo-type mechanosensitive ion channel homolog (Arabidopsis thaliana (Mouse-ear cress)).